The sequence spans 424 residues: Anaerobic glycerol-3-phosphate dehydrogenase subunit B (424 aa).

It belongs to the anaerobic G-3-P dehydrogenase subunit B family. As to quaternary structure, composed of a catalytic GlpA/B dimer and of membrane bound GlpC. Requires FMN as cofactor.

The enzyme catalyses a quinone + sn-glycerol 3-phosphate = dihydroxyacetone phosphate + a quinol. Its pathway is polyol metabolism; glycerol degradation via glycerol kinase pathway; glycerone phosphate from sn-glycerol 3-phosphate (anaerobic route): step 1/1. Functionally, conversion of glycerol 3-phosphate to dihydroxyacetone. Uses fumarate or nitrate as electron acceptor. The polypeptide is Anaerobic glycerol-3-phosphate dehydrogenase subunit B (Yersinia pseudotuberculosis serotype I (strain IP32953)).